Reading from the N-terminus, the 217-residue chain is Adenylate kinase (217 aa).

An ATP-binding site is contributed by 10–15 (GSGKGT). Residues 30-59 (STGDLLRAAVAAGSELGKQAKAAMDAGELV) form an NMP region. Residues threonine 31, arginine 36, 57–59 (ELV), 85–88 (GFPR), and glutamine 92 each bind AMP. An LID region spans residues 126–164 (GRRTCQACGAIYNIYFSPPEVDHRCDKCNSDQLVQRSDD). Position 127 (arginine 127) interacts with ATP. Residues cysteine 130 and cysteine 133 each contribute to the Zn(2+) site. 136 to 137 (IY) contacts ATP. The Zn(2+) site is built by cysteine 150 and cysteine 153. Residues arginine 161 and arginine 172 each contribute to the AMP site. An ATP-binding site is contributed by aspartate 200.

The protein belongs to the adenylate kinase family. As to quaternary structure, monomer.

It is found in the cytoplasm. The catalysed reaction is AMP + ATP = 2 ADP. It participates in purine metabolism; AMP biosynthesis via salvage pathway; AMP from ADP: step 1/1. Functionally, catalyzes the reversible transfer of the terminal phosphate group between ATP and AMP. Plays an important role in cellular energy homeostasis and in adenine nucleotide metabolism. This Nitrosococcus oceani (strain ATCC 19707 / BCRC 17464 / JCM 30415 / NCIMB 11848 / C-107) protein is Adenylate kinase.